Consider the following 207-residue polypeptide: Large ribosomal subunit protein uL4 (207 aa).

Residues 45–78 are disordered; the sequence is RQGTHAVKNRSAVSGGGRKPWRQKGTGRARQGSI.

Belongs to the universal ribosomal protein uL4 family. In terms of assembly, part of the 50S ribosomal subunit.

One of the primary rRNA binding proteins, this protein initially binds near the 5'-end of the 23S rRNA. It is important during the early stages of 50S assembly. It makes multiple contacts with different domains of the 23S rRNA in the assembled 50S subunit and ribosome. In terms of biological role, forms part of the polypeptide exit tunnel. This is Large ribosomal subunit protein uL4 from Lacticaseibacillus paracasei (strain ATCC 334 / BCRC 17002 / CCUG 31169 / CIP 107868 / KCTC 3260 / NRRL B-441) (Lactobacillus paracasei).